The following is a 588-amino-acid chain: Snake venom 5'-nucleotidase (588 aa).

Positions 1–40 are cleaved as a signal peptide; it reads MQTPKRRRGAQGCPRSSPSPPLLLLVGAVWFCAALSVAAG. Aspartate 51 and histidine 53 together coordinate Zn(2+). A disulfide bond links cysteine 66 and cysteine 71. N-linked (GlcNAc...) asparagine glycosylation occurs at asparagine 88. Aspartate 99 and asparagine 131 together coordinate Zn(2+). A glycan (N-linked (GlcNAc...) asparagine) is linked at asparagine 167. Zn(2+)-binding residues include histidine 234 and histidine 257. Asparagine 327, asparagine 347, and asparagine 361 each carry an N-linked (GlcNAc...) asparagine glycan. Intrachain disulfides connect cysteine 367–cysteine 372 and cysteine 379–cysteine 401. Arginine 368 contacts AMP. AMP contacts are provided by asparagine 404 and arginine 409. Asparagine 418 carries an N-linked (GlcNAc...) asparagine glycan. Phenylalanine 432 provides a ligand contact to AMP. The cysteines at positions 491 and 494 are disulfide-linked. The AMP site is built by phenylalanine 515 and aspartate 521. An N-linked (GlcNAc...) asparagine glycan is attached at asparagine 532. Residue serine 564 is the site of GPI-anchor amidated serine attachment. The propeptide at 565-588 is removed in mature form; it reads AGTLFQAQLFLTWGLCISLLYFIL.

The protein belongs to the 5'-nucleotidase family. It depends on Zn(2+) as a cofactor. In terms of processing, venom 5'-nucleotidases (or a part thereof) may be released into the venom via exosome-like vesicles. They may be attached via a GPI anchor to the membrane of these vesicles. Soluble forms of 5'-nucleotidase might be released by cleavage of the ectodomain in the exosome-like vesicles or venom gland cells. As to expression, expressed by the venom gland.

Its subcellular location is the membrane. The catalysed reaction is a ribonucleoside 5'-phosphate + H2O = a ribonucleoside + phosphate. In terms of biological role, hydrolyzes nucleotides into nucleosides. Snake venom 5'-nucleotidases are widely distributed among venomous snake taxa, but there is a lack of information about their biological activities. They have been shown to inhibit platelet aggregation. This effect may be due to the liberation of inhibitory AMP or adenosine by its action on ADP released upon initiation of aggregation. Venom 5'-nucleotidases are also known to synergistically act in vivo with other toxins like ADPases, phospholipases, and disintegrins to exert a more pronounced anti-coagulant effect. This is Snake venom 5'-nucleotidase from Gloydius brevicauda (Korean slamosa snake).